Reading from the N-terminus, the 571-residue chain is MSTAGDDAVGVPPACGGRSDAVGVPQLARESGAMRDQDCSGELLRSPTHNGHLLVGALKRHQNKPVLFLGDTRLTGGQLADRISQYIQAFEALGAGTGVAVGLLSLNRPEVLMIIGAGQARGYRRTALHPLGSLADHAYVLNDAGISSLIIDPNPMFVERALALLEQVDSLQQILTIGPVPDALKHVAVDLSAEAAKYQPQPLVAADLPPDQVIGLTYTGGTTGKPKGVIGTAQSIATMTSIQLAEWEWPANPRFLMCTPLSHAGAAFFTPTVIKGGEMIVLAKFDPAEVLRIIEEQRITATMLVPSMLYALLDHPDSHTRDLSSLETVYYGASAINPVRLAEAIRRFGPIFAQYYGQSEAPMVITYLAKGDHDEKRLTSCGRPTLFARVALLDEHGKPVKQGEVGEICVSGPLLAGGYWNLPDETSRTFKDGWLHTGDLAREDSDGFYYIVDRVKDMIVTGGFNVFPREVEDVVAEHPAVAQVCVVGAPDEKWGEAVTAVVVLRSNAARDEPAIEAMTAEIQAAVKQRKGSVQAPKRVVVVDSLPLTGLGKPDKKAVRARFWEGAGRAVG.

The disordered stretch occupies residues 1–22 (MSTAGDDAVGVPPACGGRSDAV).

This sequence belongs to the ATP-dependent AMP-binding enzyme family.

The catalysed reaction is a medium-chain fatty acid + ATP + CoA = a medium-chain fatty acyl-CoA + AMP + diphosphate. The enzyme catalyses a long-chain fatty acid + ATP + CoA = a long-chain fatty acyl-CoA + AMP + diphosphate. It catalyses the reaction hexanoate + ATP + CoA = hexanoyl-CoA + AMP + diphosphate. It carries out the reaction dodecanoate + ATP + CoA = dodecanoyl-CoA + AMP + diphosphate. The catalysed reaction is hexadecanoate + ATP + CoA = hexadecanoyl-CoA + AMP + diphosphate. It participates in lipid metabolism; fatty acid metabolism. In terms of biological role, catalyzes the activation of medium/long-chain fatty acids as acyl-coenzyme A (acyl-CoA). The protein is Medium/long-chain-fatty-acid--CoA ligase FadD8 of Mycobacterium tuberculosis (strain ATCC 25618 / H37Rv).